A 543-amino-acid chain; its full sequence is Glutamyl-tRNA(Gln) amidotransferase subunit A, chloroplastic/mitochondrial (543 aa).

Catalysis depends on charge relay system residues Lys123 and Ser198. Ser222 (acyl-ester intermediate) is an active-site residue.

The protein belongs to the amidase family. GatA subfamily. In terms of assembly, subunit of the heterotrimeric GatCAB amidotransferase (AdT) complex, composed of A, B and C subunits.

The protein resides in the mitochondrion. It localises to the plastid. It is found in the chloroplast stroma. The enzyme catalyses L-glutamyl-tRNA(Gln) + L-glutamine + ATP + H2O = L-glutaminyl-tRNA(Gln) + L-glutamate + ADP + phosphate + H(+). Functionally, allows the formation of correctly charged Gln-tRNA(Gln) through the transamidation of misacylated Glu-tRNA(Gln) in chloroplasts and mitochondria. The reaction takes place in the presence of glutamine and ATP through an activated gamma-phospho-Glu-tRNA(Gln). The chain is Glutamyl-tRNA(Gln) amidotransferase subunit A, chloroplastic/mitochondrial from Oryza sativa subsp. indica (Rice).